A 504-amino-acid polypeptide reads, in one-letter code: Pyruvate kinase (504 aa).

Arg53 contributes to the substrate binding site. Residues Asn55, Ser57, Asp88, and Thr89 each coordinate K(+). Residue 55-58 coordinates ATP; the sequence is NFSH. ATP-binding residues include Arg95 and Lys181. Mg(2+) is bound at residue Glu246. Residues Gly269, Asp270, and Thr302 each contribute to the substrate site. Residue Asp270 participates in Mg(2+) binding.

The protein belongs to the pyruvate kinase family. As to quaternary structure, homotetramer. The cofactor is Mg(2+). It depends on K(+) as a cofactor.

It catalyses the reaction pyruvate + ATP = phosphoenolpyruvate + ADP + H(+). The protein operates within carbohydrate degradation; glycolysis; pyruvate from D-glyceraldehyde 3-phosphate: step 5/5. This is Pyruvate kinase (PYK1) from Debaryomyces hansenii (strain ATCC 36239 / CBS 767 / BCRC 21394 / JCM 1990 / NBRC 0083 / IGC 2968) (Yeast).